The chain runs to 263 residues: Dihydromethanophenazine:CoB--CoM heterodisulfide reductase subunit E (263 aa).

The next 5 helical transmembrane spans lie at 18–38 (TFVQ…YGLI), 108–128 (VMHL…GMMF), 150–170 (FLSI…LVAL), 184–204 (IMYD…GFIA), and 221–241 (VAPP…IAFI).

This sequence belongs to the HdrE family. The dihydromethanophenazine:CoB--CoM heterodisulfide reductase is composed of two subunits; HdrD and HdrE. Heme b serves as cofactor.

The protein resides in the cell membrane. The enzyme catalyses methanophenazine + coenzyme B + coenzyme M = dihydromethanophenazine + coenzyme M-coenzyme B heterodisulfide. Its pathway is cofactor metabolism; coenzyme M-coenzyme B heterodisulfide reduction; coenzyme B and coenzyme M from coenzyme M-coenzyme B heterodisulfide: step 1/1. Functionally, part of a complex that catalyzes the reversible reduction of CoM-S-S-CoB to the thiol-coenzymes H-S-CoM (coenzyme M) and H-S-CoB (coenzyme B). HdrE may be responsible for anchoring the complex to the membrane. This chain is Dihydromethanophenazine:CoB--CoM heterodisulfide reductase subunit E (hdrE), found in Methanosarcina barkeri (strain Fusaro / DSM 804).